Reading from the N-terminus, the 421-residue chain is Ethanolamine-phosphate cytidylyltransferase (421 aa).

Residues I8–L28 form a helical membrane-spanning segment. The tract at residues S203–A227 is disordered. Positions R204–H215 are enriched in polar residues. Residues A262–F263, H270–I273, R298, H346–V349, and S377–I381 each bind CTP. Positions A402–D421 are disordered. Basic and acidic residues predominate over residues K403–E413. S416 is modified (phosphoserine).

It belongs to the cytidylyltransferase family. In terms of tissue distribution, expressed in root tip, lateral root primordia, leaves, shoot apex, stem vascular bundles, pollen and embryos.

It is found in the mitochondrion outer membrane. The enzyme catalyses phosphoethanolamine + CTP + H(+) = CDP-ethanolamine + diphosphate. The protein operates within phospholipid metabolism; phosphatidylethanolamine biosynthesis; phosphatidylethanolamine from ethanolamine: step 2/3. Functionally, plays an important role in the biosynthesis of the phospholipid phosphatidylethanolamine. Catalyzes the formation of CDP-ethanolamine. Essential for early embryonic development. The protein is Ethanolamine-phosphate cytidylyltransferase of Arabidopsis thaliana (Mouse-ear cress).